Consider the following 95-residue polypeptide: MRKYEIMYIIRPDVDEESKKAVVERFNNILTTNGAEITETKDWGKRRLAYEINDFRDGFYQILNVQAGAEAVQEFDRLAKISDDIIRHIVVKEEE.

Belongs to the bacterial ribosomal protein bS6 family.

Its function is as follows. Binds together with bS18 to 16S ribosomal RNA. The sequence is that of Small ribosomal subunit protein bS6 from Bacillus licheniformis (strain ATCC 14580 / DSM 13 / JCM 2505 / CCUG 7422 / NBRC 12200 / NCIMB 9375 / NCTC 10341 / NRRL NRS-1264 / Gibson 46).